The chain runs to 115 residues: Large ribosomal subunit protein bL19 (115 aa).

The protein belongs to the bacterial ribosomal protein bL19 family.

Functionally, this protein is located at the 30S-50S ribosomal subunit interface and may play a role in the structure and function of the aminoacyl-tRNA binding site. The sequence is that of Large ribosomal subunit protein bL19 from Francisella tularensis subsp. mediasiatica (strain FSC147).